The primary structure comprises 213 residues: ER lumen protein-retaining receptor erd-2.1 (213 aa).

Topologically, residues 1–2 are lumenal; it reads MN. The helical transmembrane segment at 3 to 21 threads the bilayer; it reads LFRFTADVAHAIAIVVLLL. At 22–35 the chain is on the cytoplasmic side; that stretch reads KIWKSRSCEGISGR. A helical membrane pass occupies residues 36–53; sequence SQLLFALVFVTRYLDLFT. At 54 to 61 the chain is on the lumenal side; that stretch reads NFFSFYNT. A helical membrane pass occupies residues 62–80; sequence AMKIFYLVASFGTVYLMWA. Over 81-96 the chain is Cytoplasmic; the sequence is KFKATYDRNNDSFRIE. Residues 97–110 form a helical membrane-spanning segment; the sequence is FLVIPSMILALLIN. At 111–117 the chain is on the lumenal side; it reads HEFIFME. The helical transmembrane segment at 118–137 threads the bilayer; the sequence is VMWTFSIYLEAVAIMPQLFM. At 138–149 the chain is on the cytoplasmic side; it reads LSRTGNAETITA. The helical transmembrane segment at 150–168 threads the bilayer; it reads HYLFALGSYRFLYILNWVY. Topologically, residues 169–178 are lumenal; that stretch reads RYYTESFFDP. The chain crosses the membrane as a helical span at residues 179–199; sequence ISVVAGIVQTVLYADFFYLYI. Topologically, residues 200 to 213 are cytoplasmic; it reads TRVIQSNRQFEMSA.

The protein belongs to the ERD2 family.

The protein resides in the endoplasmic reticulum membrane. Functionally, required for the retention of luminal endoplasmic reticulum proteins. Determines the specificity of the luminal ER protein retention system. Also required for normal vesicular traffic through the Golgi. The protein is ER lumen protein-retaining receptor erd-2.1 of Caenorhabditis elegans.